Here is a 355-residue protein sequence, read N- to C-terminus: MTALKNDRFLRALLKQPVDVTPVWMMRQAGRYLPEYRASRANAGDFMSLCMNPEFACEVTLQPLDRYPQLDAAILFSDILTIPDAMGQGLYFETGEGPRFKKVVSTLADIEALPIPDPHKDLGYVMDAVSTIRRELNGRVPLIGFSGSPWTLATYMVEGGSSKDFRKSKAMLYDNPQAMHLLLDKLAQSVTAYLNGQIRAGAQAVQIFDSWGGSLSAAAYQEFSLAYMRKIVSGLIREHDGRKVPVILFTKGGGLWLESIADAGADSLGLDWTCDIGEARRRVGSKVSLQGNMDPTVLYANPQAIRSEVARILASYGKGSGHVFNLGHGITPEVKPEHAGAFLEAVHELSAQYHE.

Substrate is bound by residues 27-31 (RQAGR), Asp78, Tyr155, Ser210, and His328.

Belongs to the uroporphyrinogen decarboxylase family. As to quaternary structure, homodimer.

The protein resides in the cytoplasm. The catalysed reaction is uroporphyrinogen III + 4 H(+) = coproporphyrinogen III + 4 CO2. It functions in the pathway porphyrin-containing compound metabolism; protoporphyrin-IX biosynthesis; coproporphyrinogen-III from 5-aminolevulinate: step 4/4. Its function is as follows. Catalyzes the decarboxylation of four acetate groups of uroporphyrinogen-III to yield coproporphyrinogen-III. The protein is Uroporphyrinogen decarboxylase of Pseudomonas fluorescens (strain ATCC BAA-477 / NRRL B-23932 / Pf-5).